The primary structure comprises 229 residues: Dephospho-CoA kinase (229 aa).

The DPCK domain maps to Thr-3–Lys-203. Gly-11–Ala-16 provides a ligand contact to ATP. The segment at Lys-203–Gly-229 is disordered.

Belongs to the CoaE family.

The protein resides in the cytoplasm. The catalysed reaction is 3'-dephospho-CoA + ATP = ADP + CoA + H(+). Its pathway is cofactor biosynthesis; coenzyme A biosynthesis; CoA from (R)-pantothenate: step 5/5. Catalyzes the phosphorylation of the 3'-hydroxyl group of dephosphocoenzyme A to form coenzyme A. This chain is Dephospho-CoA kinase, found in Frankia casuarinae (strain DSM 45818 / CECT 9043 / HFP020203 / CcI3).